The primary structure comprises 416 residues: Gamma-glutamyl phosphate reductase (416 aa).

It belongs to the gamma-glutamyl phosphate reductase family.

It is found in the cytoplasm. The catalysed reaction is L-glutamate 5-semialdehyde + phosphate + NADP(+) = L-glutamyl 5-phosphate + NADPH + H(+). It functions in the pathway amino-acid biosynthesis; L-proline biosynthesis; L-glutamate 5-semialdehyde from L-glutamate: step 2/2. Functionally, catalyzes the NADPH-dependent reduction of L-glutamate 5-phosphate into L-glutamate 5-semialdehyde and phosphate. The product spontaneously undergoes cyclization to form 1-pyrroline-5-carboxylate. This Salmonella typhi protein is Gamma-glutamyl phosphate reductase.